The primary structure comprises 116 residues: Putative iron-sulfur cluster insertion protein ErpA (116 aa).

Iron-sulfur cluster-binding residues include cysteine 44, cysteine 108, and cysteine 110.

It belongs to the HesB/IscA family. As to quaternary structure, homodimer. Requires iron-sulfur cluster as cofactor.

In terms of biological role, required for insertion of 4Fe-4S clusters. The polypeptide is Putative iron-sulfur cluster insertion protein ErpA (Thiobacillus denitrificans (strain ATCC 25259 / T1)).